Consider the following 249-residue polypeptide: DNA repair protein RecO (249 aa).

It belongs to the RecO family.

Involved in DNA repair and RecF pathway recombination. The chain is DNA repair protein RecO from Exiguobacterium sp. (strain ATCC BAA-1283 / AT1b).